The chain runs to 987 residues: Ephrin type-B receptor 4 (987 aa).

The signal sequence occupies residues 1 to 15 (MELRALLCWASLATA). Topologically, residues 16-539 (LEETLLNTKL…ESESWREQLA (524 aa)) are extracellular. Positions 17 to 202 (EETLLNTKLE…FYKKCSWLIT (186 aa)) constitute an Eph LBD domain. Intrachain disulfides connect Cys-61–Cys-184 and Cys-97–Cys-107. N-linked (GlcNAc...) asparagine glycans are attached at residues Asn-203, Asn-335, and Asn-426. 2 Fibronectin type-III domains span residues 323–432 (PPSA…TDRE) and 436–529 (AVSD…TQLD). The helical transmembrane segment at 540-560 (LIAGTAVVGVVLVLVVVIIAV) threads the bilayer. Residues 561–987 (LCLRKQSNGR…GGTGGPAQQF (427 aa)) are Cytoplasmic-facing. The Protein kinase domain occupies 615-899 (VKIEEVIGAG…ENGGASHPLL (285 aa)). ATP-binding positions include 621-629 (IGAGEFGEV) and Lys-647. Catalysis depends on Asp-740, which acts as the Proton acceptor. Phosphoserine is present on residues Ser-769, Ser-770, Ser-911, and Ser-943. The SAM domain occupies 907–971 (SAFGSVGEWL…LASVQHMKSQ (65 aa)). A disordered region spans residues 965–987 (VQHMKSQAKPGAPGGTGGPAQQF). A compositionally biased stretch (gly residues) spans 976–987 (APGGTGGPAQQF). A PDZ-binding motif is present at residues 985–987 (QQF).

Belongs to the protein kinase superfamily. Tyr protein kinase family. Ephrin receptor subfamily. As to quaternary structure, heterotetramer upon binding of the ligand. The heterotetramer is composed of an ephrin dimer and a receptor dimer. Oligomerization is probably required to induce biological responses. Interacts with RASA1; the interaction depends on EPHB4 tyrosine-phosphorylation. Post-translationally, phosphorylated; autophosphorylation is stimulated by EFNB2. Expressed in various organ systems, including lung, liver, kidney, intestine, muscle and heart. Expressed in myogenic progenitor cells.

It localises to the cell membrane. The enzyme catalyses L-tyrosyl-[protein] + ATP = O-phospho-L-tyrosyl-[protein] + ADP + H(+). In terms of biological role, receptor tyrosine kinase which binds promiscuously transmembrane ephrin-B family ligands residing on adjacent cells, leading to contact-dependent bidirectional signaling into neighboring cells. The signaling pathway downstream of the receptor is referred to as forward signaling while the signaling pathway downstream of the ephrin ligand is referred to as reverse signaling. Together with its cognate ligand/functional ligand EFNB2 it is involved in the regulation of cell adhesion and migration, and plays a central role in heart morphogenesis, angiogenesis and blood vessel remodeling and permeability. EPHB4-mediated forward signaling controls cellular repulsion and segregation from EFNB2-expressing cells. This Mus musculus (Mouse) protein is Ephrin type-B receptor 4 (Ephb4).